Here is a 464-residue protein sequence, read N- to C-terminus: Sushi-repeat-containing protein SRPX (464 aa).

Positions Met1–Gly30 are cleaved as a signal peptide. O-linked (Xyl...) (chondroitin sulfate) serine glycosylation occurs at Ser34. Cystine bridges form between Cys57-Cys85, Cys69-Cys103, Cys89-Cys115, Cys120-Cys161, and Cys147-Cys174. Sushi domains lie at Cys57–Gln117 and Lys118–Asp176. One can recognise an HYR domain in the interval Leu177–Val259. The region spanning Arg260–Ala319 is the Sushi 3 domain. 2 disulfides stabilise this stretch: Cys262–Cys304 and Cys290–Cys317.

The polypeptide is Sushi-repeat-containing protein SRPX (Srpx) (Mus musculus (Mouse)).